Here is a 250-residue protein sequence, read N- to C-terminus: Small ribosomal subunit protein uS3 (250 aa).

Positions 39 to 111 (IRTLIKNNYP…KVQINIFEVK (73 aa)) constitute a KH type-2 domain.

It belongs to the universal ribosomal protein uS3 family. Part of the 30S ribosomal subunit. Forms a tight complex with proteins S10 and S14.

Binds the lower part of the 30S subunit head. Binds mRNA in the 70S ribosome, positioning it for translation. This is Small ribosomal subunit protein uS3 from Alder yellows phytoplasma.